Reading from the N-terminus, the 580-residue chain is Efflux pump dotC (580 aa).

A compositionally biased stretch (basic and acidic residues) spans 1 to 34 (MSEDHTKADNLSEKDPHSPERSDSSSHEDAHARE). The segment at 1–45 (MSEDHTKADNLSEKDPHSPERSDSSSHEDAHAREEEESSDDDGAL) is disordered. N-linked (GlcNAc...) asparagine glycosylation occurs at N10. The span at 35–44 (EEESSDDDGA) shows a compositional bias: acidic residues. The chain crosses the membrane as a helical span at residues 49–69 (PASLIAIVMIALSLAVFLSAL). N-linked (GlcNAc...) asparagine glycosylation occurs at N86. The next 13 helical transmembrane spans lie at 89–109 (AAYT…TPIW), 127–147 (ALFM…MLIT), 153–173 (GAAG…LFSL), 181–201 (GMIG…GGAF), 209–229 (WCFY…FFFL), 242–262 (FAAI…MFLF), 275–295 (SATV…FGLV), 318–338 (ALLV…YLPL), 348–368 (PILA…SAAA), 380–400 (LIPM…LINF), 409–429 (LIIY…APLV), 444–466 (TATF…QVLY), and 519–539 (SPMW…ILLV). The interval 559–580 (KKAEAERKAERQAKDLEKAQKS) is disordered.

Belongs to the major facilitator superfamily. TCR/Tet family.

The protein resides in the cell membrane. It localises to the vacuole membrane. Its function is as follows. Efflux pump; part of the gene cluster that mediates the biosynthesis of dothistromin (DOTH), a polyketide toxin very similar in structure to the aflatoxin precursor, versicolorin B. One function of dotC may be to transport early-stage dothistromin biosynthetic intermediates from the cytoplasm into vacuoles, thereby affecting the rate of dothistromin production. This is Efflux pump dotC from Dothistroma septosporum (strain NZE10 / CBS 128990) (Red band needle blight fungus).